A 347-amino-acid polypeptide reads, in one-letter code: Quinolinate synthase (347 aa).

The iminosuccinate site is built by His47 and Ser68. Cys113 contacts [4Fe-4S] cluster. Iminosuccinate is bound by residues Tyr139 to Asn141 and Ser156. Cys200 serves as a coordination point for [4Fe-4S] cluster. Iminosuccinate contacts are provided by residues His226–Glu228 and Thr243. Cys297 provides a ligand contact to [4Fe-4S] cluster.

It belongs to the quinolinate synthase family. Type 1 subfamily. [4Fe-4S] cluster is required as a cofactor.

The protein resides in the cytoplasm. The catalysed reaction is iminosuccinate + dihydroxyacetone phosphate = quinolinate + phosphate + 2 H2O + H(+). Its pathway is cofactor biosynthesis; NAD(+) biosynthesis; quinolinate from iminoaspartate: step 1/1. Catalyzes the condensation of iminoaspartate with dihydroxyacetone phosphate to form quinolinate. This is Quinolinate synthase from Shigella boydii serotype 4 (strain Sb227).